Reading from the N-terminus, the 236-residue chain is Uridylate kinase (236 aa).

10–13 is a binding site for ATP; it reads KLSG. Gly-52 is a binding site for UMP. 2 residues coordinate ATP: Gly-53 and Arg-57. Residues Asp-72 and 133–140 contribute to the UMP site; that span reads TGNPFFTT. Residues Thr-160, Tyr-166, and Asp-169 each coordinate ATP.

The protein belongs to the UMP kinase family. Homohexamer.

It is found in the cytoplasm. It carries out the reaction UMP + ATP = UDP + ADP. The protein operates within pyrimidine metabolism; CTP biosynthesis via de novo pathway; UDP from UMP (UMPK route): step 1/1. Inhibited by UTP. Catalyzes the reversible phosphorylation of UMP to UDP. This chain is Uridylate kinase, found in Ralstonia nicotianae (strain ATCC BAA-1114 / GMI1000) (Ralstonia solanacearum).